We begin with the raw amino-acid sequence, 659 residues long: UvrABC system protein B (659 aa).

A Helicase ATP-binding domain is found at 25-412 (QSIENGNRGQ…SEIVAEQIIR (388 aa)). An ATP-binding site is contributed by 38–45 (GVTGSGKT). Positions 91 to 114 (YYDYYQPEAYVPQTDTFIEKDASI) match the Beta-hairpin motif. Residues 429-582 (QIDDLYGEIQ…QMEYNEEHNI (154 aa)) form the Helicase C-terminal domain. The region spanning 622 to 657 (EKLIEQYEEEMKEAAKNLQFERAAELRDIIKDLKEN) is the UVR domain.

This sequence belongs to the UvrB family. In terms of assembly, forms a heterotetramer with UvrA during the search for lesions. Interacts with UvrC in an incision complex.

The protein localises to the cytoplasm. In terms of biological role, the UvrABC repair system catalyzes the recognition and processing of DNA lesions. A damage recognition complex composed of 2 UvrA and 2 UvrB subunits scans DNA for abnormalities. Upon binding of the UvrA(2)B(2) complex to a putative damaged site, the DNA wraps around one UvrB monomer. DNA wrap is dependent on ATP binding by UvrB and probably causes local melting of the DNA helix, facilitating insertion of UvrB beta-hairpin between the DNA strands. Then UvrB probes one DNA strand for the presence of a lesion. If a lesion is found the UvrA subunits dissociate and the UvrB-DNA preincision complex is formed. This complex is subsequently bound by UvrC and the second UvrB is released. If no lesion is found, the DNA wraps around the other UvrB subunit that will check the other stand for damage. This is UvrABC system protein B from Clostridium perfringens (strain 13 / Type A).